Reading from the N-terminus, the 650-residue chain is Probable E3 ubiquitin ligase complex SCF subunit scon-2 (650 aa).

Residues 124-170 (IDFISALPVELAQKVLCYLDTVSLTKAAQVSQRWRTLADSDAVWVRM) enclose the F-box domain. The tract at residues 200-244 (QRQLAKGGPQGRVTELADSHDSQDRSVNQHGKRPAAEAEEEDPIK) is disordered. A compositionally biased stretch (basic and acidic residues) spans 214–223 (ELADSHDSQD). WD repeat units follow at residues 292-320 (GHENGVTCLQLDDNILATGSYDTTIKIWN), 332-360 (GHTAGIRALQFDDSKLISGSLDHTIKVWN), 372-400 (AHTDSVISVHFDGHLLASGSSDKTVKIFD), 411-441 (GHSDWVNSTHVDIKSRTVFSASDDTTIKLWD), and 453-488 (GHVGHVQQVLILPPEYEPDEEVLNGASQDNQDAMSV). The disordered stretch occupies residues 482–525 (NQDAMSVSSGGSGSPSMSHAQIERAGSPGSHSSSHNLLPSSLPS). Low complexity-rich tracts occupy residues 487-499 (SVSSGGSGSPSMS) and 507-525 (GSPGSHSSSHNLLPSSLPS). 3 WD repeats span residues 528–564 (EDVRHLYGSAFVADESRPLPPRYFMTGGLDSTMRLWD), 576–604 (GHLEGVWSLAGDTIRVISGANDGMVKTWE), and 616–644 (GHCGPVTCVGLSDSLMASGSEDGTIRLHS).

This sequence belongs to the WD repeat MET30/SCONB/SCON-2 family. In terms of assembly, component of the SCF(scon-2) E3 ubiquitin ligase complex.

Its pathway is protein modification; protein ubiquitination. In terms of biological role, component of the SCF(scon-2) E3 ubiquitin ligase complex involved in the regulation of sulfur metabolite repression, probably by mediating the inactivation or degradation of the metR transcription factor. This chain is Probable E3 ubiquitin ligase complex SCF subunit scon-2 (scon-2), found in Neurospora crassa (strain ATCC 24698 / 74-OR23-1A / CBS 708.71 / DSM 1257 / FGSC 987).